The primary structure comprises 524 residues: 2-isopropylmalate synthase (524 aa).

The 263-residue stretch at 12 to 274 folds into the Pyruvate carboxyltransferase domain; that stretch reads VIIFDTTLRD…WNNIETTMLT (263 aa). The Mn(2+) site is built by Asp21, His209, His211, and Asn245. The segment at 398 to 524 is regulatory domain; sequence KLNSLTVIAG…EAVPAVAAAG (127 aa).

This sequence belongs to the alpha-IPM synthase/homocitrate synthase family. LeuA type 1 subfamily. In terms of assembly, homodimer. The cofactor is Mn(2+).

The protein localises to the cytoplasm. It catalyses the reaction 3-methyl-2-oxobutanoate + acetyl-CoA + H2O = (2S)-2-isopropylmalate + CoA + H(+). The protein operates within amino-acid biosynthesis; L-leucine biosynthesis; L-leucine from 3-methyl-2-oxobutanoate: step 1/4. In terms of biological role, catalyzes the condensation of the acetyl group of acetyl-CoA with 3-methyl-2-oxobutanoate (2-ketoisovalerate) to form 3-carboxy-3-hydroxy-4-methylpentanoate (2-isopropylmalate). This chain is 2-isopropylmalate synthase, found in Rhodopseudomonas palustris (strain HaA2).